A 244-amino-acid chain; its full sequence is 3-oxoacyl-[acyl-carrier-protein] reductase FabG (244 aa).

NADP(+) is bound by residues 9–12 (GASR), 60–61 (NV), and asparagine 87. Serine 139 is a substrate binding site. The active-site Proton acceptor is the tyrosine 152. NADP(+)-binding positions include 152–156 (YVATK) and isoleucine 185.

It belongs to the short-chain dehydrogenases/reductases (SDR) family. In terms of assembly, homotetramer.

The enzyme catalyses a (3R)-hydroxyacyl-[ACP] + NADP(+) = a 3-oxoacyl-[ACP] + NADPH + H(+). Its pathway is lipid metabolism; fatty acid biosynthesis. Its function is as follows. Catalyzes the NADPH-dependent reduction of beta-ketoacyl-ACP substrates to beta-hydroxyacyl-ACP products, the first reductive step in the elongation cycle of fatty acid biosynthesis. In Staphylococcus epidermidis (strain ATCC 35984 / DSM 28319 / BCRC 17069 / CCUG 31568 / BM 3577 / RP62A), this protein is 3-oxoacyl-[acyl-carrier-protein] reductase FabG (fabG).